The following is a 45-amino-acid chain: Large ribosomal subunit protein bL34 (45 aa).

The protein belongs to the bacterial ribosomal protein bL34 family.

The chain is Large ribosomal subunit protein bL34 from Kineococcus radiotolerans (strain ATCC BAA-149 / DSM 14245 / SRS30216).